Reading from the N-terminus, the 111-residue chain is uncharacterized protein (111 aa).

The protein localises to the mitochondrion. This is an uncharacterized protein from Arabidopsis thaliana (Mouse-ear cress).